The primary structure comprises 149 residues: Calmodulin (149 aa).

N-acetylalanine is present on Ala-2. EF-hand domains follow at residues 8–43, 44–79, 81–116, and 117–149; these read EQISEFKEAFSLFDKDGDGTITTKELGTVMRSLGQN, PTEAELQDMINEIDTDGNGTIDFPEFLTLMARKLKD, DTEEELIEAFRVFDRDGDGYISADELRHVMTNLGEK, and LTNEEVDEMIREADIDGDGQINYEEFVKMMIAK. Positions 21, 23, 25, 27, 32, 57, 59, 61, 63, 68, 94, 96, 98, 100, 105, 130, 132, 134, 136, and 141 each coordinate Ca(2+).

The protein belongs to the calmodulin family.

The protein localises to the cytoplasm. Its function is as follows. Calmodulin mediates the control of a large number of enzymes, ion channels and other proteins by Ca(2+). Among the enzymes to be stimulated by the calmodulin-Ca(2+) complex are a number of protein kinases and phosphatases. This chain is Calmodulin, found in Plasmodium falciparum (isolate 3D7).